The following is a 1074-amino-acid chain: Probable phospholipid-transporting ATPase tat-5 (1074 aa).

The disordered stretch occupies residues 1-26 (MGKRKKNDESSSSSSQKPCVSSSSDD). The span at 10–26 (SSSSSSQKPCVSSSSDD) shows a compositional bias: low complexity. Transmembrane regions (helical) follow at residues 118–138 (FVPIVLFQQFKFFLNLYFLLM), 143–163 (FIPAIQIGAPITYWGPLGFVL), 354–374 (LTKLLFCFVLVLSSVMVAMKG), and 378–398 (LWYRYLMRFILLFSYIIPISL). The active-site 4-aspartylphosphate intermediate is Asp442. ATP contacts are provided by Asp442, Lys443, Thr444, Glu524, Phe570, Lys575, Lys594, Arg623, Thr624, Thr704, Gly705, Asp706, Arg786, and Lys792. Position 442 (Asp442) interacts with Mg(2+). Thr444 contacts Mg(2+). Asp813 is a binding site for Mg(2+). Residues Asn816 and Asp817 each contribute to the ATP site. Asp817 lines the Mg(2+) pocket. Transmembrane regions (helical) follow at residues 886 to 906 (AIFSCVFYFASVSLYQGVLMV), 954 to 974 (IWVLISLYQGAVIMYGALLVF), 978 to 998 (FIHVVSISFSALIVTELIMVA), 1006 to 1026 (WAMLLAQALSLGLYMISLILF), and 1038 to 1058 (WVFISKTTAITAVSCLPLYIV).

This sequence belongs to the cation transport ATPase (P-type) (TC 3.A.3) family. Type IV subfamily. Mg(2+) is required as a cofactor.

It is found in the cell membrane. It carries out the reaction ATP + H2O + phospholipidSide 1 = ADP + phosphate + phospholipidSide 2.. Plays a role in regulating membrane trafficking of cargo proteins during embryogenesis. Regulates snx-3 retromer-mediated endosomal sorting of mig-14, a transporter of Wnt egl-20 morphogen. Together with mon-2 and pad-1, may participate in the formation of endosomal carriers that direct mig-14 trafficking back to Golgi, away from lysosomal degradation. Required for Wnt egl-20 gradient formation along the anteroposterior body axis and migration of QL neuroblast descendants toward the posterior part. Maintains phosphatidylethanolamine (PE) asymmetry at the cell membrane and prevents the budding of ectosome vesicles that affect intercellular communication and morphogenesis. The sequence is that of Probable phospholipid-transporting ATPase tat-5 (tat-5) from Caenorhabditis elegans.